Here is a 447-residue protein sequence, read N- to C-terminus: Probable glycine dehydrogenase (decarboxylating) subunit 1 (447 aa).

Belongs to the GcvP family. N-terminal subunit subfamily. As to quaternary structure, the glycine cleavage system is composed of four proteins: P, T, L and H. In this organism, the P 'protein' is a heterodimer of two subunits.

It catalyses the reaction N(6)-[(R)-lipoyl]-L-lysyl-[glycine-cleavage complex H protein] + glycine + H(+) = N(6)-[(R)-S(8)-aminomethyldihydrolipoyl]-L-lysyl-[glycine-cleavage complex H protein] + CO2. Functionally, the glycine cleavage system catalyzes the degradation of glycine. The P protein binds the alpha-amino group of glycine through its pyridoxal phosphate cofactor; CO(2) is released and the remaining methylamine moiety is then transferred to the lipoamide cofactor of the H protein. This Azorhizobium caulinodans (strain ATCC 43989 / DSM 5975 / JCM 20966 / LMG 6465 / NBRC 14845 / NCIMB 13405 / ORS 571) protein is Probable glycine dehydrogenase (decarboxylating) subunit 1.